Reading from the N-terminus, the 425-residue chain is Glutamyl-tRNA reductase (425 aa).

Substrate is bound by residues 49–52, S109, 114–116, and Q120; these read TCNR and EGQ. C50 serves as the catalytic Nucleophile. 189-194 serves as a coordination point for NADP(+); sequence GAGKMS.

Belongs to the glutamyl-tRNA reductase family. As to quaternary structure, homodimer.

The catalysed reaction is (S)-4-amino-5-oxopentanoate + tRNA(Glu) + NADP(+) = L-glutamyl-tRNA(Glu) + NADPH + H(+). It participates in porphyrin-containing compound metabolism; protoporphyrin-IX biosynthesis; 5-aminolevulinate from L-glutamyl-tRNA(Glu): step 1/2. The protein operates within porphyrin-containing compound metabolism; chlorophyll biosynthesis. Its function is as follows. Catalyzes the NADPH-dependent reduction of glutamyl-tRNA(Glu) to glutamate 1-semialdehyde (GSA). This is Glutamyl-tRNA reductase from Picosynechococcus sp. (strain ATCC 27264 / PCC 7002 / PR-6) (Agmenellum quadruplicatum).